Consider the following 488-residue polypeptide: DELTA-alicitoxin-Pse2b (488 aa).

The first 21 residues, 1 to 21 (MSKPIIFLLTAFVVLTDLGAT), serve as a signal peptide directing secretion. The MACPF domain occupies 24–344 (TEKVEVKAKP…GYLNFDCAYE (321 aa)). Residues 369-398 (VCKLGPEGCHSDDDCESDDLIYCACCGDSC) form the EGF-like domain. 3 cysteine pairs are disulfide-bonded: Cys-370-Cys-383, Cys-377-Cys-391, and Cys-393-Cys-398.

The protein resides in the secreted. The protein localises to the nematocyst. Causes lethal toxicity to the shrimp Palaemon paucidence, and hemolytic activity toward sheep red blood cells. The polypeptide is DELTA-alicitoxin-Pse2b (Phyllodiscus semoni (Night anemone)).